We begin with the raw amino-acid sequence, 333 residues long: Coiled-coil domain-containing protein 68 (333 aa).

Coiled coils occupy residues 86–120 (LDLL…SREA) and 160–302 (EKEQ…HWTE).

In terms of assembly, interacts with CEP170.

It is found in the cytoplasm. Its subcellular location is the cytoskeleton. The protein resides in the microtubule organizing center. It localises to the centrosome. The protein localises to the centriole. Centriolar protein required for centriole subdistal appendage assembly and microtubule anchoring in interphase cells. Together with CCDC120, cooperate with subdistal appendage components ODF2, NIN and CEP170 for hierarchical subdistal appendage assembly. This chain is Coiled-coil domain-containing protein 68 (Ccdc68), found in Mus musculus (Mouse).